We begin with the raw amino-acid sequence, 306 residues long: Acetaldehyde dehydrogenase 2/3 (306 aa).

Cysteine 130 (acyl-thioester intermediate) is an active-site residue. NAD(+)-binding positions include 161–169 (SAGPGTRKN) and asparagine 272.

Belongs to the acetaldehyde dehydrogenase family.

The enzyme catalyses acetaldehyde + NAD(+) + CoA = acetyl-CoA + NADH + H(+). This Azoarcus sp. (strain BH72) protein is Acetaldehyde dehydrogenase 2/3 (mhpF).